A 70-amino-acid polypeptide reads, in one-letter code: Large ribosomal subunit protein bL31 (70 aa).

Residues Cys-16, Cys-18, Cys-37, and Cys-40 each coordinate Zn(2+).

The protein belongs to the bacterial ribosomal protein bL31 family. Type A subfamily. As to quaternary structure, part of the 50S ribosomal subunit. Zn(2+) is required as a cofactor.

In terms of biological role, binds the 23S rRNA. The chain is Large ribosomal subunit protein bL31 from Alteromonas mediterranea (strain DSM 17117 / CIP 110805 / LMG 28347 / Deep ecotype).